The sequence spans 449 residues: Adenylosuccinate lyase (449 aa).

Residues 9–10, 75–77, and 102–103 each bind N(6)-(1,2-dicarboxyethyl)-AMP; these read RY, KHD, and TS. Residue His150 is the Proton donor/acceptor of the active site. A N(6)-(1,2-dicarboxyethyl)-AMP-binding site is contributed by Gln224. The active-site Proton donor/acceptor is Ser275. Residues Ser276, 281 to 283, and 320 to 324 each bind N(6)-(1,2-dicarboxyethyl)-AMP; these read KMN and SSERI.

This sequence belongs to the lyase 1 family. Adenylosuccinate lyase subfamily. As to quaternary structure, homotetramer. Residues from neighboring subunits contribute catalytic and substrate-binding residues to each active site.

It carries out the reaction N(6)-(1,2-dicarboxyethyl)-AMP = fumarate + AMP. The catalysed reaction is (2S)-2-[5-amino-1-(5-phospho-beta-D-ribosyl)imidazole-4-carboxamido]succinate = 5-amino-1-(5-phospho-beta-D-ribosyl)imidazole-4-carboxamide + fumarate. It functions in the pathway purine metabolism; AMP biosynthesis via de novo pathway; AMP from IMP: step 2/2. It participates in purine metabolism; IMP biosynthesis via de novo pathway; 5-amino-1-(5-phospho-D-ribosyl)imidazole-4-carboxamide from 5-amino-1-(5-phospho-D-ribosyl)imidazole-4-carboxylate: step 2/2. Its function is as follows. Catalyzes two reactions in de novo purine nucleotide biosynthesis. Catalyzes the breakdown of 5-aminoimidazole- (N-succinylocarboxamide) ribotide (SAICAR or 2-[5-amino-1-(5-phospho-beta-D-ribosyl)imidazole-4-carboxamido]succinate) to 5-aminoimidazole-4-carboxamide ribotide (AICAR or 5-amino-1-(5-phospho-beta-D-ribosyl)imidazole-4-carboxamide) and fumarate, and of adenylosuccinate (ADS or N(6)-(1,2-dicarboxyethyl)-AMP) to adenosine monophosphate (AMP) and fumarate. The sequence is that of Adenylosuccinate lyase (purB) from Methanothermobacter thermautotrophicus (strain ATCC 29096 / DSM 1053 / JCM 10044 / NBRC 100330 / Delta H) (Methanobacterium thermoautotrophicum).